A 312-amino-acid polypeptide reads, in one-letter code: MEESSRVLIVGGTGYIGRRIVKASIALGHPTFILFRKEVVSDVEKVEMLLSFKKNGAKLLEASFDDHESLVDAVKQVDVVISAVAGNHMRHHILQQLKLVEAIKEAGNIKRFVPSEFGMDPGLMEHAMAPGNIVFIDKIKVREAIEAASIPHTYISANIFAGYLVGGLAQLGRVMPPSEKVILYGDGNVKAVWVDEDDVGIYTIKAIDDPHTLNKTMYIRPPLNILSQKEVVEKWEKLSGKSLNKINISVEDFLAGMEGQSYGEQIGISHFYQMFYRGDLYNFEIGPNGVEASQLYPEVKYTTVDSYMERYL.

NADP(+)-binding positions include 11–17, R36, and K45; that span reads GGTGYIG. The active-site Proton acceptor is the K138. Position 142 (R142) interacts with NADP(+). H270 serves as a coordination point for substrate.

The protein belongs to the NmrA-type oxidoreductase family. Isoflavone reductase subfamily. In terms of assembly, dimer.

The enzyme catalyses (+)-lariciresinol + NADP(+) = (+)-pinoresinol + NADPH + H(+). The catalysed reaction is (-)-secoisolariciresinol + NADP(+) = (+)-lariciresinol + NADPH + H(+). It catalyses the reaction (-)-lariciresinol + NADP(+) = (-)-pinoresinol + NADPH + H(+). Functionally, reductase involved in lignan biosynthesis. Catalyzes the enantioselective sequential conversion of (+)-pinoresinol into (+)-lariciresinol and of (+)-lariciresinol into (-)-secoisolariciresinol. Can also convert with a lower efficiency (-)-pinoresinol into (-)-lariciresinol, but not (-)-lariciresinol into (+)-secoisolariciresinol. Abstracts the 4R-hydride from the NADPH cofactor during catalysis. The polypeptide is Bifunctional pinoresinol-lariciresinol reductase 2 (PLR_Tp2) (Thuja plicata (Western red-cedar)).